We begin with the raw amino-acid sequence, 513 residues long: Catalase (513 aa).

The signal sequence occupies residues 1–30; sequence MNPSLNAFRPGRLLVAASLTASLLSLSVQA. Catalysis depends on residues H81 and N153. Y361 is a heme binding site. The segment covering 391 to 407 has biased composition (polar residues); it reads DGALNAGHSTSGVNYQP. Positions 391–413 are disordered; that stretch reads DGALNAGHSTSGVNYQPSRLDPR.

Belongs to the catalase family. Requires heme as cofactor.

It localises to the periplasm. It carries out the reaction 2 H2O2 = O2 + 2 H2O. Functionally, decomposes hydrogen peroxide into water and oxygen; serves to protect cells from the toxic effects of hydrogen peroxide. The chain is Catalase (katB) from Pseudomonas aeruginosa (strain ATCC 15692 / DSM 22644 / CIP 104116 / JCM 14847 / LMG 12228 / 1C / PRS 101 / PAO1).